The sequence spans 104 residues: Turripeptide OL55-like (104 aa).

In terms of processing, contains 8 disulfide bonds. Expressed by the venom duct.

The protein localises to the secreted. Acts as a neurotoxin by inhibiting an ion channel. The protein is Turripeptide OL55-like of Iotyrris cingulifera (Sea snail).